Here is a 103-residue protein sequence, read N- to C-terminus: Small ribosomal subunit protein uS10 (103 aa).

It belongs to the universal ribosomal protein uS10 family. Part of the 30S ribosomal subunit.

Involved in the binding of tRNA to the ribosomes. The polypeptide is Small ribosomal subunit protein uS10 (Thioalkalivibrio sulfidiphilus (strain HL-EbGR7)).